Consider the following 335-residue polypeptide: MTDVLASAERVLRDGIGLTEPELRAVLDVDDDSLPRLLDLAHRVRRRWCGPGVEIEGIVSVKTGGCPEDCHFCSQSGRFDSPVRSAWLDIPNLVTAAEQTAATGATEFCIVAAVRGPDDRLMRQVRAAVRAIREAVDINISCSLGILTPDQAAELAEIGVHRYNHNLETARSYFPSVVTTHTWEERWQTLQLVRAAGMEVCCGGILGMGESLDQRAEFAAQLADLDPDEVPLNFLDPRPGTPFADLPVVSVAEALRAAAMFRLALPRTILRFAGGREITLGDAGTRDALRGGVNGLIVGNYLTTLGRDPAADLALLAELGEPIRRSELQALSQAL.

The region spanning 53–276 is the Radical SAM core domain; it reads VEIEGIVSVK…RTILRFAGGR (224 aa). The [4Fe-4S] cluster site is built by Cys66, Cys70, and Cys73. The [2Fe-2S] cluster site is built by Cys109, Cys142, Cys201, and Arg271.

It belongs to the radical SAM superfamily. Biotin synthase family. As to quaternary structure, homodimer. The cofactor is [4Fe-4S] cluster. Requires [2Fe-2S] cluster as cofactor.

The catalysed reaction is (4R,5S)-dethiobiotin + (sulfur carrier)-SH + 2 reduced [2Fe-2S]-[ferredoxin] + 2 S-adenosyl-L-methionine = (sulfur carrier)-H + biotin + 2 5'-deoxyadenosine + 2 L-methionine + 2 oxidized [2Fe-2S]-[ferredoxin]. The protein operates within cofactor biosynthesis; biotin biosynthesis; biotin from 7,8-diaminononanoate: step 2/2. Its function is as follows. Catalyzes the conversion of dethiobiotin (DTB) to biotin by the insertion of a sulfur atom into dethiobiotin via a radical-based mechanism. This Acidothermus cellulolyticus (strain ATCC 43068 / DSM 8971 / 11B) protein is Biotin synthase.